The sequence spans 525 residues: GMP synthase [glutamine-hydrolyzing] (525 aa).

Residues 9-202 form the Glutamine amidotransferase type-1 domain; it reads SILIIDFGSQ…VHKIVGLKSD (194 aa). Cysteine 86 functions as the Nucleophile in the catalytic mechanism. Residues histidine 176 and glutamate 178 contribute to the active site. The GMPS ATP-PPase domain maps to 203–400; the sequence is WTMAAYRAEM…LGLPESFIGR (198 aa). An ATP-binding site is contributed by 230-236; that stretch reads SGGVDSS.

Homodimer.

The catalysed reaction is XMP + L-glutamine + ATP + H2O = GMP + L-glutamate + AMP + diphosphate + 2 H(+). The protein operates within purine metabolism; GMP biosynthesis; GMP from XMP (L-Gln route): step 1/1. Its function is as follows. Catalyzes the synthesis of GMP from XMP. This is GMP synthase [glutamine-hydrolyzing] from Agrobacterium fabrum (strain C58 / ATCC 33970) (Agrobacterium tumefaciens (strain C58)).